A 259-amino-acid chain; its full sequence is 5'-nucleotidase SurE (259 aa).

Residues D13, D14, S44, and N101 each coordinate a divalent metal cation.

Belongs to the SurE nucleotidase family. A divalent metal cation is required as a cofactor.

The protein resides in the cytoplasm. The catalysed reaction is a ribonucleoside 5'-phosphate + H2O = a ribonucleoside + phosphate. Nucleotidase that shows phosphatase activity on nucleoside 5'-monophosphates. This chain is 5'-nucleotidase SurE, found in Flavobacterium johnsoniae (strain ATCC 17061 / DSM 2064 / JCM 8514 / BCRC 14874 / CCUG 350202 / NBRC 14942 / NCIMB 11054 / UW101) (Cytophaga johnsonae).